A 314-amino-acid polypeptide reads, in one-letter code: Olfactory receptor 5F1 (314 aa).

The Extracellular segment spans residues 1–25; sequence MTRKNYTSLTEFVLLGLADTLELQI. Asn-5 is a glycosylation site (N-linked (GlcNAc...) asparagine). Residues 26-46 traverse the membrane as a helical segment; it reads ILFLFFLVIYTLTVLGNLGMI. Residues 47-54 lie on the Cytoplasmic side of the membrane; it reads LLIRIDSQ. A helical transmembrane segment spans residues 55-75; sequence LHTPMYFFLANLSFVDVCNST. Topologically, residues 76-99 are extracellular; sequence TITPKMLADLLSEKKTISFAGCFL. Cys-97 and Cys-189 are oxidised to a cystine. The chain crosses the membrane as a helical span at residues 100–120; it reads QMYFFISLATTECILFGLMAY. The Cytoplasmic portion of the chain corresponds to 121–139; that stretch reads DRYAAICRPLLYSLIMSRT. The helical transmembrane segment at 140–160 threads the bilayer; it reads VYLKMAAGAFAAGLLNFMVNT. Residues 161 to 196 lie on the Extracellular side of the membrane; sequence SHVSSLSFCDSNVIHHFFCDSPPLFKLSCSDTILKE. Residues 197 to 217 form a helical membrane-spanning segment; that stretch reads SISSILAGVNIVGTLLVILSS. Residues 218 to 237 are Cytoplasmic-facing; it reads YSYVLFSIFSMHSGEGRHRA. A helical transmembrane segment spans residues 238–258; the sequence is FSTCASHLTAIILFYATCIYT. Topologically, residues 259-271 are extracellular; it reads YLRPSSSYSLNQD. A helical transmembrane segment spans residues 272 to 292; that stretch reads KVASVFYTVVIPMLNPLIYSL. The Cytoplasmic portion of the chain corresponds to 293-314; it reads RSKEVKKALANVISRKRTSSFL.

It belongs to the G-protein coupled receptor 1 family.

The protein resides in the cell membrane. In terms of biological role, odorant receptor. The protein is Olfactory receptor 5F1 (OR5F1) of Homo sapiens (Human).